A 548-amino-acid chain; its full sequence is Chaperonin GroEL (548 aa).

Residues 29–32, K50, 86–90, G414, 478–480, and D494 each bind ATP; these read TMGP, DGTTT, and NAA.

This sequence belongs to the chaperonin (HSP60) family. In terms of assembly, forms a cylinder of 14 subunits composed of two heptameric rings stacked back-to-back. Interacts with the co-chaperonin GroES.

It is found in the cytoplasm. It carries out the reaction ATP + H2O + a folded polypeptide = ADP + phosphate + an unfolded polypeptide.. Functionally, together with its co-chaperonin GroES, plays an essential role in assisting protein folding. The GroEL-GroES system forms a nano-cage that allows encapsulation of the non-native substrate proteins and provides a physical environment optimized to promote and accelerate protein folding. The protein is Chaperonin GroEL of Legionella pneumophila (strain Corby).